The chain runs to 266 residues: Glutamate racemase (266 aa).

Residues 9–10 (DS) and 41–42 (YG) contribute to the substrate site. Residue Cys72 is the Proton donor/acceptor of the active site. Position 73 to 74 (73 to 74 (NT)) interacts with substrate. Residue Cys184 is the Proton donor/acceptor of the active site. Substrate is bound at residue 185–186 (TH).

This sequence belongs to the aspartate/glutamate racemases family.

The enzyme catalyses L-glutamate = D-glutamate. The protein operates within cell wall biogenesis; peptidoglycan biosynthesis. Its function is as follows. Provides the (R)-glutamate required for cell wall biosynthesis. The protein is Glutamate racemase of Staphylococcus aureus (strain bovine RF122 / ET3-1).